Consider the following 535-residue polypeptide: UDP-glucuronosyltransferase 1A1 (535 aa).

An N-terminal signal peptide occupies residues 1–29 (MTVVCWSSRLLLLLPYLLLCVFGPSASHA). Asparagine 89, asparagine 297, and asparagine 435 each carry an N-linked (GlcNAc...) asparagine glycan. The chain crosses the membrane as a helical span at residues 493–509 (VIGFLLAIVLTVVFIVF).

The protein belongs to the UDP-glycosyltransferase family. Homodimers. Homooligomer. Interacts with UGT1A3, UGT1A4, UGT1A6, UGT1A7, UGT1A8, UGT1A9 and UGT1A10 to form heterodimers. As to expression, highly expressed in liver and at lower levels in colon, kidney, stomach and intestine.

It is found in the endoplasmic reticulum membrane. The catalysed reaction is glucuronate acceptor + UDP-alpha-D-glucuronate = acceptor beta-D-glucuronoside + UDP + H(+). The enzyme catalyses 17beta-estradiol + UDP-alpha-D-glucuronate = 17beta-estradiol 3-O-(beta-D-glucuronate) + UDP + H(+). It carries out the reaction 2-hydroxyestrone + UDP-alpha-D-glucuronate = 2-hydroxyestrone 3-O-(beta-D-glucuronate) + UDP + H(+). It catalyses the reaction 2-hydroxy-17beta-estradiol + UDP-alpha-D-glucuronate = 2-hydroxy-17beta-estradiol 3-O-(beta-D-glucuronate) + UDP + H(+). The catalysed reaction is 2-methoxy-17beta-estradiol + UDP-alpha-D-glucuronate = 2-methoxy-17beta-estradiol 3-O-(beta-D-glucuronate) + UDP + H(+). The enzyme catalyses 17alpha-estradiol + UDP-alpha-D-glucuronate = 17alpha-estradiol 3-O-(beta-D-glucuronate) + UDP + H(+). It carries out the reaction 16beta,17beta-estriol + UDP-alpha-D-glucuronate = 16beta,17beta-estriol 16-O-(beta-D-glucuronate) + UDP + H(+). It catalyses the reaction losartan + UDP-alpha-D-glucuronate = losartan-2-N-beta-D-glucuronide + UDP. The catalysed reaction is prunetin + UDP-alpha-D-glucuronate = prunetin-4'-O-beta-D-glucuronide + UDP. The enzyme catalyses SN-38 + UDP-alpha-D-glucuronate = SN-38 O-beta-D-glucuronide + UDP + H(+). It carries out the reaction (4Z,15Z)-bilirubin IXalpha + UDP-alpha-D-glucuronate = (4Z,15Z)-bilirubin IXalpha C12-beta-D-glucuronoside + UDP. It catalyses the reaction (4Z,15Z)-bilirubin IXalpha + UDP-alpha-D-glucuronate = (4Z,15Z)-bilirubin IXalpha C8-beta-D-glucuronoside + UDP. The catalysed reaction is (4Z,15Z)-bilirubin IXalpha C8-beta-D-glucuronoside + UDP-alpha-D-glucuronate = (4Z,15Z)-bilirubin IXalpha C8,C12-beta-D-bisglucuronoside + UDP. The enzyme catalyses (4Z,15Z)-bilirubin IXalpha C12-beta-D-glucuronoside + UDP-alpha-D-glucuronate = (4Z,15Z)-bilirubin IXalpha C8,C12-beta-D-bisglucuronoside + UDP. It carries out the reaction 8-iso-prostaglandin F2alpha + UDP-alpha-D-glucuronate = 8-iso-prostaglandin F2alpha-glucuronide + UDP + H(+). It catalyses the reaction (5Z,8Z,11Z,14Z)-eicosatetraenoate + UDP-alpha-D-glucuronate = O-[(5Z),(8Z),(11Z),(14Z)-eicosatetraenoyl]-beta-D-glucuronate + UDP. The catalysed reaction is 15-hydroxy-(5Z,8Z,11Z,13E)-eicosatetraenoate + UDP-alpha-D-glucuronate = 15-O-(beta-D-glucuronosyl)-(5Z,8Z,11Z,14Z)-eicosatetraenoate + UDP + H(+). The enzyme catalyses 20-hydroxy-(5Z,8Z,11Z,14Z)-eicosatetraenoate + UDP-alpha-D-glucuronate = 20-O-(beta-D-glucuronosyl)-(5Z,8Z,11Z,14Z)-eicosatetraenoate + UDP + H(+). It carries out the reaction prostaglandin B1 + UDP-alpha-D-glucuronate = 15-O-(beta-D-glucuronosyl)-prostaglandin B1 + UDP + H(+). It catalyses the reaction (E)-ferulate + UDP-alpha-D-glucuronate = (E)-4-O-(beta-D-glucuronosyl)-ferulate + UDP + H(+). The catalysed reaction is (E)-ferulate + UDP-alpha-D-glucuronate = (E)-ferulic acid beta-D-glucuronate ester + UDP. UDP-glucuronosyltransferase (UGT) that catalyzes phase II biotransformation reactions in which lipophilic substrates are conjugated with glucuronic acid to increase the metabolite's water solubility, thereby facilitating excretion into either the urine or bile. Essential for the elimination and detoxification of drugs, xenobiotics and endogenous compounds. Catalyzes the glucuronidation of endogenous estrogen hormones such as estradiol, estrone and estriol. Involved in the glucuronidation of bilirubin, a degradation product occurring in the normal catabolic pathway that breaks down heme in vertebrates. Involved in the glucuronidation of arachidonic acid (AA) and AA-derived eicosanoids including 15-HETE, 20-HETE, PGB1 and F2-isoprostane (8-iso-PGF2alpha). Involved in the glucuronidation of the phytochemical ferulic acid at the phenolic or the carboxylic acid group. Also catalyzes the glucuronidation the isoflavones genistein, daidzein, glycitein, formononetin, biochanin A and prunetin, which are phytoestrogens with anticancer and cardiovascular properties. Involved in the glucuronidation of the AGTR1 angiotensin receptor antagonist losartan, a drug which can inhibit the effect of angiotensin II. Involved in the biotransformation of 7-ethyl-10-hydroxycamptothecin (SN-38), the pharmacologically active metabolite of the anticancer drug irinotecan. The sequence is that of UDP-glucuronosyltransferase 1A1 from Mus musculus (Mouse).